The sequence spans 629 residues: DNA-directed RNA polymerase subunit beta' (629 aa).

Zn(2+) contacts are provided by cysteine 70, cysteine 72, cysteine 85, and cysteine 88. Aspartate 472, aspartate 474, and aspartate 476 together coordinate Mg(2+).

The protein belongs to the RNA polymerase beta' chain family. RpoC1 subfamily. As to quaternary structure, in plastids the minimal PEP RNA polymerase catalytic core is composed of four subunits: alpha, beta, beta', and beta''. When a (nuclear-encoded) sigma factor is associated with the core the holoenzyme is formed, which can initiate transcription. Mg(2+) serves as cofactor. Zn(2+) is required as a cofactor.

It is found in the plastid. It localises to the chloroplast. It carries out the reaction RNA(n) + a ribonucleoside 5'-triphosphate = RNA(n+1) + diphosphate. DNA-dependent RNA polymerase catalyzes the transcription of DNA into RNA using the four ribonucleoside triphosphates as substrates. The protein is DNA-directed RNA polymerase subunit beta' of Porphyra purpurea (Red seaweed).